The sequence spans 238 residues: Uridylate kinase (238 aa).

12–15 contributes to the ATP binding site; the sequence is KLSG. Glycine 54 contributes to the UMP binding site. The ATP site is built by glycine 55 and arginine 59. UMP contacts are provided by residues aspartate 74 and 135–142; that span reads TGNPFFTT. ATP is bound by residues threonine 162, tyrosine 168, and aspartate 171.

This sequence belongs to the UMP kinase family. In terms of assembly, homohexamer.

The protein resides in the cytoplasm. It carries out the reaction UMP + ATP = UDP + ADP. It participates in pyrimidine metabolism; CTP biosynthesis via de novo pathway; UDP from UMP (UMPK route): step 1/1. Inhibited by UTP. In terms of biological role, catalyzes the reversible phosphorylation of UMP to UDP. This Dechloromonas aromatica (strain RCB) protein is Uridylate kinase.